The primary structure comprises 122 residues: Elsinochromes biosynthesis cluster protein HP4 (122 aa).

Part of the gene cluster that mediates the biosynthesis of elsinochromes, pigments consisting of at least four interconvertible tautomers (A, B, C and D) that have a core phenolic quinone to which various side chains are attached and which play an important role in fungal pathogenesis. The non-reducing polyketide synthase PKS1 was proposed to iteratively catalyze decarboxylation between acetyl-CoA and malonyl-CoA subunits for polyketide chain elongation. The released polyketide undergoes cyclization to form an aromatic ring, and proceeds via serial modification steps to produce the heptaketide back- bone of elsinochrome. As elsinochrome has a symmetrical structure, two identical heptaketides are fused to form a core 1,2-dihydrobenzo-perylene ring structure, which can then be successively modified to produce the various derivatives of elsinochrome. Some of these reactions may be cooperatively carried out, at least in part, by the products of RDT1, OXR1 and PKS1. PRF1, embedded within the elsinochrome cluster possibly functions to stabilize some of the biosynthetic enzymes required for elsinochrome production. As prefoldin is a hexamer containing 2 a and 4 b subunits, additional prefoldin subunits, whose coding genes may not immediately link to the elsinochrome biosynthetic gene cluster, are required to fulfill the chaperone function. In addition, no methyltransferase-coding gene exists within the biosynthetic gene cluster, even though elsinochrome has four methyl groups at positions C3, C7, C8 and C12. Apparently, the identified gene cluster does not contain the entire entourage of genes responsible for elsinochrome biosynthesis. Once elsinochrome is synthesized, it must be exported outside the fungal cells, which is probably accomplished by the ECT1 transporter, to avoid toxicity. The protein is Elsinochromes biosynthesis cluster protein HP4 of Elsinoe fawcettii (Citrus scab fungus).